Here is a 189-residue protein sequence, read N- to C-terminus: Large ribosomal subunit protein eL18 (189 aa).

This sequence belongs to the eukaryotic ribosomal protein eL18 family.

The protein localises to the cytoplasm. This Drosophila pseudoobscura pseudoobscura (Fruit fly) protein is Large ribosomal subunit protein eL18 (RpL18).